The chain runs to 555 residues: T-complex protein 1 subunit gamma (555 aa).

Positions 527 to 555 (KKKQAPGSGPSKPTIETEGDADNEQILPD) are disordered.

The protein belongs to the TCP-1 chaperonin family. Heterooligomeric complex of about 850 to 900 kDa that forms two stacked rings, 12 to 16 nm in diameter. Interacts with CCT8.

The protein localises to the cytoplasm. Functionally, molecular chaperone; assists the folding of proteins upon ATP hydrolysis. Known to play a role, in vitro, in the folding of actin and tubulin. The protein is T-complex protein 1 subunit gamma of Arabidopsis thaliana (Mouse-ear cress).